Consider the following 124-residue polypeptide: Succinate dehydrogenase cytochrome b556 subunit (124 aa).

The Cytoplasmic portion of the chain corresponds to 1–29 (MTKIKQEIYNKRPTSPHLTIYKPQISSTL). A helical membrane pass occupies residues 30–55 (SILHRMTGVALFFVVSILVWWLILSK). Residues 56 to 67 (YDNNYLQLARCC) are Periplasmic-facing. The chain crosses the membrane as a helical span at residues 68 to 88 (IIKICLVAFSYAWCYHLCNGI). Residue H83 coordinates heme. The Cytoplasmic portion of the chain corresponds to 89-103 (RHLFWDIGYGFSIRA). Residues 104-124 (VNITGWCVVVCSILLTMLLWV) traverse the membrane as a helical segment.

The protein belongs to the cytochrome b560 family. Part of an enzyme complex containing four subunits: a flavoprotein, an iron-sulfur protein, plus two membrane-anchoring proteins, SdhC and SdhD. The complex can form homotrimers. The cofactor is heme.

Its subcellular location is the cell inner membrane. Its pathway is carbohydrate metabolism; tricarboxylic acid cycle. Membrane-anchoring subunit of succinate dehydrogenase (SDH). The polypeptide is Succinate dehydrogenase cytochrome b556 subunit (sdhC) (Rickettsia typhi (strain ATCC VR-144 / Wilmington)).